The sequence spans 242 residues: 2-C-methyl-D-erythritol 4-phosphate cytidylyltransferase (242 aa).

The protein belongs to the IspD/TarI cytidylyltransferase family. IspD subfamily.

The enzyme catalyses 2-C-methyl-D-erythritol 4-phosphate + CTP + H(+) = 4-CDP-2-C-methyl-D-erythritol + diphosphate. It participates in isoprenoid biosynthesis; isopentenyl diphosphate biosynthesis via DXP pathway; isopentenyl diphosphate from 1-deoxy-D-xylulose 5-phosphate: step 2/6. Catalyzes the formation of 4-diphosphocytidyl-2-C-methyl-D-erythritol from CTP and 2-C-methyl-D-erythritol 4-phosphate (MEP). The polypeptide is 2-C-methyl-D-erythritol 4-phosphate cytidylyltransferase (Vesicomyosocius okutanii subsp. Calyptogena okutanii (strain HA)).